An 85-amino-acid polypeptide reads, in one-letter code: Elongation factor 1-beta (85 aa).

It belongs to the EF-1-beta/EF-1-delta family.

Functionally, promotes the exchange of GDP for GTP in EF-1-alpha/GDP, thus allowing the regeneration of EF-1-alpha/GTP that could then be used to form the ternary complex EF-1-alpha/GTP/AAtRNA. This is Elongation factor 1-beta from Methanoregula boonei (strain DSM 21154 / JCM 14090 / 6A8).